Reading from the N-terminus, the 769-residue chain is Intron Large complex component GCFC2 (769 aa).

Disordered stretches follow at residues 1–122 (MALR…PIVE) and 134–212 (RKRE…DENQ). A phosphoserine mark is found at Ser-16, Ser-17, Ser-19, and Ser-85. Thr-86 carries the post-translational modification Phosphothreonine. Residues Ser-118 and Ser-169 each carry the phosphoserine modification. Positions 190–201 (RMAEETSIRSEE) are enriched in basic and acidic residues. The span at 202 to 212 (SSEESQEDENQ) shows a compositional bias: acidic residues. A phosphoserine mark is found at Ser-203 and Ser-206. Residues 256-308 (NLEIIKKQLNNRLTLLQESHRSHQREYEKYEQDIKSSKTAIQNLESASDHAQN) adopt a coiled-coil conformation.

It belongs to the GCF family. Found in the Intron Large (IL) complex, a post-mRNA release spliceosomal complex containing the excised intron, U2, U5 and U6 snRNPs, and splicing factors. Interacts with TFIP11 and DHX15.

It is found in the nucleus. The protein localises to the nucleoplasm. Its subcellular location is the nucleolus. Its function is as follows. Involved in pre-mRNA splicing through regulating spliceosome C complex formation. May play a role during late-stage splicing events and turnover of excised introns. In Mus musculus (Mouse), this protein is Intron Large complex component GCFC2 (Gcfc2).